Consider the following 217-residue polypeptide: Regulator of G-protein signaling 19 (217 aa).

Residues 1–29 (MPTPHEAEKQITGPEEADRPPSMSSHDTA) are disordered. 2 positions are modified to phosphoserine: S24 and S97. The RGS domain maps to 90-206 (SFDKLMHSPA…LSSPTYRALL (117 aa)). S151 bears the Phosphoserine; by MAPK1 and MAPK3 mark. Residues 207 to 217 (LQGPSQSSSEA) form an interaction with GIPC region.

In terms of assembly, interacts with GIPC PDZ domain. Interacts with GNAO1. Post-translationally, fatty acylated. Heavily palmitoylated in the cysteine string motif. Phosphorylated, mainly on serine residues. As to expression, highest expression in lung. Placenta, liver and heart also express high levels of GAIP.

The protein localises to the membrane. Functionally, inhibits signal transduction by increasing the GTPase activity of G protein alpha subunits thereby driving them into their inactive GDP-bound form. Binds to G-alpha subfamily 1 members, with the order G(i)a3 &gt; G(i)a1 &gt; G(o)a &gt;&gt; G(z)a/G(i)a2. Activity on G(z)-alpha is inhibited by phosphorylation and palmitoylation of the G-protein. The protein is Regulator of G-protein signaling 19 (RGS19) of Homo sapiens (Human).